The following is a 416-amino-acid chain: Multifunctional CCA protein (416 aa).

ATP-binding residues include Gly-8 and Arg-11. The CTP site is built by Gly-8 and Arg-11. Mg(2+) contacts are provided by Asp-21 and Asp-23. ATP contacts are provided by Arg-91, Arg-138, and Arg-141. CTP is bound by residues Arg-91, Arg-138, and Arg-141. The 103-residue stretch at 229–331 (TGLHQELVSD…YELLQRCDAF (103 aa)) folds into the HD domain.

The protein belongs to the tRNA nucleotidyltransferase/poly(A) polymerase family. Bacterial CCA-adding enzyme type 1 subfamily. Monomer. Can also form homodimers and oligomers. Mg(2+) serves as cofactor. Ni(2+) is required as a cofactor.

The catalysed reaction is a tRNA precursor + 2 CTP + ATP = a tRNA with a 3' CCA end + 3 diphosphate. It carries out the reaction a tRNA with a 3' CCA end + 2 CTP + ATP = a tRNA with a 3' CCACCA end + 3 diphosphate. Catalyzes the addition and repair of the essential 3'-terminal CCA sequence in tRNAs without using a nucleic acid template. Adds these three nucleotides in the order of C, C, and A to the tRNA nucleotide-73, using CTP and ATP as substrates and producing inorganic pyrophosphate. tRNA 3'-terminal CCA addition is required both for tRNA processing and repair. Also involved in tRNA surveillance by mediating tandem CCA addition to generate a CCACCA at the 3' terminus of unstable tRNAs. While stable tRNAs receive only 3'-terminal CCA, unstable tRNAs are marked with CCACCA and rapidly degraded. The chain is Multifunctional CCA protein from Xylella fastidiosa (strain M23).